Reading from the N-terminus, the 318-residue chain is dTDP-6-deoxy-L-talose 4-dehydrogenase (NAD(P)(+)) (318 aa).

Residues 19 to 20 (FI), 60 to 61 (DP), Asn-95, Thr-120, Tyr-145, and Lys-149 contribute to the NAD(+) site. The substrate site is built by Thr-120 and Tyr-145. The Proton acceptor role is filled by Tyr-145.

It belongs to the NAD(P)-dependent epimerase/dehydratase family.

The enzyme catalyses dTDP-6-deoxy-beta-L-talose + NAD(+) = dTDP-4-dehydro-beta-L-rhamnose + NADH + H(+). The catalysed reaction is dTDP-6-deoxy-beta-L-talose + NADP(+) = dTDP-4-dehydro-beta-L-rhamnose + NADPH + H(+). Its function is as follows. Catalyzes the reduction of dTDP-6-deoxy-L-lyxo-4-hexulose to dTDP-6-deoxy-L-talose. Can use NAD(+) or NADP(+). The protein is dTDP-6-deoxy-L-talose 4-dehydrogenase (NAD(P)(+)) (tal) of Kitasatospora kifunensis (Streptomyces kifunensis).